The sequence spans 202 residues: ADP-ribosylation factor-like protein 15 (202 aa).

Residues 39-46 (GLTGSGKT), 82-86 (ELGGA), and 142-145 (NHQD) contribute to the GTP site.

Belongs to the small GTPase superfamily. Arf family.

The chain is ADP-ribosylation factor-like protein 15 (ARL15) from Bos taurus (Bovine).